Reading from the N-terminus, the 279-residue chain is Tryptophan 2,3-dioxygenase (279 aa).

Substrate contacts are provided by residues 48–52, tyrosine 110, and arginine 114; that span reads FIIQH. Histidine 237 serves as a coordination point for heme. Substrate is bound at residue threonine 251.

The protein belongs to the tryptophan 2,3-dioxygenase family. In terms of assembly, homotetramer. Heme is required as a cofactor.

It catalyses the reaction L-tryptophan + O2 = N-formyl-L-kynurenine. It functions in the pathway amino-acid degradation; L-tryptophan degradation via kynurenine pathway; L-kynurenine from L-tryptophan: step 1/2. Heme-dependent dioxygenase that catalyzes the oxidative cleavage of the L-tryptophan (L-Trp) pyrrole ring and converts L-tryptophan to N-formyl-L-kynurenine. Catalyzes the oxidative cleavage of the indole moiety. The sequence is that of Tryptophan 2,3-dioxygenase from Bradyrhizobium sp. (strain ORS 278).